The chain runs to 251 residues: MPLQNVKVADEGSVNFQKVKEECITAMESLHKVVACYRHLALTIGGSSDSIHLRDELRRTRERAQELALSNRNKLTTALRDKKLSKKDREELERLWVEFSSCLELFHNDMCKVYELGMAVPHSATNKPAIQTGSTGNTSAIASRALNVQNINYSDSPANKASLEYQEIEEEILKVDNMITDMEMKVNVLRWTVEANTRMNDELKSTHDSSSVVLLSEEESNSKGCCSDGQLIVFLLLCGTALVAITLYSIL.

The Cytoplasmic segment spans residues 1–230 (MPLQNVKVAD…NSKGCCSDGQ (230 aa)). Coiled-coil stretches lie at residues 52–94 (HLRD…ELER) and 158–187 (ANKA…MKVN). The chain crosses the membrane as a helical; Anchor for type IV membrane protein span at residues 231–250 (LIVFLLLCGTALVAITLYSI). Leu-251 is a topological domain (extracellular).

This sequence belongs to the RGS7BP/RGS9BP family.

The protein localises to the membrane. Regulator of G protein-coupled receptor (GPCR) signaling. Probably acts by regulating the activity of some 'R7' family protein (RGS6, RGS7, RGS9 and/or RGS11). The sequence is that of Regulator of G-protein signaling 9-binding protein B (rgs9bp-b) from Xenopus laevis (African clawed frog).